Reading from the N-terminus, the 134-residue chain is Putative F-box protein R638 (134 aa).

Positions 5-52 (NIMNLLNEDCILHILSFLADKDKIQLSLSCKSNLKFLHKTIYDDIYFY) constitute an F-box domain.

The sequence is that of Putative F-box protein R638 from Acanthamoeba polyphaga mimivirus (APMV).